A 209-amino-acid chain; its full sequence is High-affinity nitrate transporter 3.2 (209 aa).

The first 22 residues, 1-22 (MAIHTLLFVSLLIFSLIESSSG), serve as a signal peptide directing secretion. The chain crosses the membrane as a helical span at residues 177 to 197 (LDIASTFFSVFSVVSLFVFFV).

Belongs to the NAR2 family. As to expression, bearly detected in roots and shoots.

The protein localises to the cell membrane. In terms of biological role, acts as a dual component transporter with NTR2.1. Required for high-affinity nitrate transport. In Arabidopsis thaliana (Mouse-ear cress), this protein is High-affinity nitrate transporter 3.2.